The chain runs to 25 residues: FNPCPYSDDTVKMIILTRENKKHDF.

It belongs to the AB hydrolase superfamily. Lipase family. In terms of processing, contains six disulfide bonds. In terms of tissue distribution, expressed by the venom gland.

Its subcellular location is the secreted. It carries out the reaction a 1,2-diacyl-sn-glycero-3-phosphocholine + H2O = a 2-acyl-sn-glycero-3-phosphocholine + a fatty acid + H(+). The enzyme catalyses 1-(9Z-octadecenoyl)-2-hexadecanoyl-sn-glycero-3-phosphocholine + H2O = 2-hexadecanoyl-sn-glycero-3-phosphocholine + (9Z)-octadecenoate + H(+). The catalysed reaction is a 1-acyl-sn-glycero-3-phosphocholine + H2O = sn-glycerol 3-phosphocholine + a fatty acid + H(+). Its pathway is phospholipid metabolism. Its activity is regulated as follows. Activity is maximal in the presence of calcium. However, unlike phospholipases A2 whose catalytic activity is strictly calcium-dependent, this enzyme shows considerable catalytic activity on phosphatidylcholine emulsified in calcium free solution; the catalytic activity of VT-2a assayed in the absence of calcium ions is 18-20% of that assayed in solution containing calcium ions. Catalyzes the hydrolysis of glycerophospholipids such as phosphatidylcholine (1,2-diacyl-sn-glycero-3-phosphocholine) and has a moderate activity to hydrolyze lysoglycerophospholipids such as lysophosphatidylcholine (1-acyl-sn-glycero-3-phosphocholine), but is unable to hydrolyze sphingomyelin. In addition to acting as an allergen, it possesses a potent hemolytic activity on red blood cells of mice (98.8% of hemolysis at 3.0 ug/ml). The polypeptide is Phospholipase A1 verutoxin-2a (Vespa velutina (Asian yellow-legged hornet)).